The following is a 154-amino-acid chain: Myoglobin (154 aa).

The Globin domain maps to 2-148 (GLSEGEWQLV…FRKDIAAKYK (147 aa)). S4 bears the Phosphoserine mark. H65 contributes to the nitrite binding site. H65 contributes to the O2 binding site. Phosphothreonine is present on T68. Heme b is bound at residue H94.

As to quaternary structure, monomer.

The protein resides in the cytoplasm. It localises to the sarcoplasm. It catalyses the reaction Fe(III)-heme b-[protein] + nitric oxide + H2O = Fe(II)-heme b-[protein] + nitrite + 2 H(+). It carries out the reaction H2O2 + AH2 = A + 2 H2O. Monomeric heme protein which primary function is to store oxygen and facilitate its diffusion within muscle tissues. Reversibly binds oxygen through a pentacoordinated heme iron and enables its timely and efficient release as needed during periods of heightened demand. Depending on the oxidative conditions of tissues and cells, and in addition to its ability to bind oxygen, it also has a nitrite reductase activity whereby it regulates the production of bioactive nitric oxide. Under stress conditions, like hypoxia and anoxia, it also protects cells against reactive oxygen species thanks to its pseudoperoxidase activity. This Delphinapterus leucas (Beluga whale) protein is Myoglobin (MB).